A 336-amino-acid polypeptide reads, in one-letter code: tRNA N6-adenosine threonylcarbamoyltransferase (336 aa).

Fe cation-binding residues include His111 and His115. Substrate contacts are provided by residues Val134–Gly138, Asp167, Gly180, Asp184, and Asn272. Asp300 is a binding site for Fe cation.

The protein belongs to the KAE1 / TsaD family. Requires Fe(2+) as cofactor.

Its subcellular location is the cytoplasm. It catalyses the reaction L-threonylcarbamoyladenylate + adenosine(37) in tRNA = N(6)-L-threonylcarbamoyladenosine(37) in tRNA + AMP + H(+). In terms of biological role, required for the formation of a threonylcarbamoyl group on adenosine at position 37 (t(6)A37) in tRNAs that read codons beginning with adenine. Is involved in the transfer of the threonylcarbamoyl moiety of threonylcarbamoyl-AMP (TC-AMP) to the N6 group of A37, together with TsaE and TsaB. TsaD likely plays a direct catalytic role in this reaction. The sequence is that of tRNA N6-adenosine threonylcarbamoyltransferase from Caldicellulosiruptor saccharolyticus (strain ATCC 43494 / DSM 8903 / Tp8T 6331).